The primary structure comprises 191 residues: UPF0312 protein Sputcn32_2702 (191 aa).

Residues 1 to 22 (MKKQLLSALIGVSLLAPMAASA) form the signal peptide.

Belongs to the UPF0312 family. Type 1 subfamily.

It localises to the periplasm. This Shewanella putrefaciens (strain CN-32 / ATCC BAA-453) protein is UPF0312 protein Sputcn32_2702.